Reading from the N-terminus, the 144-residue chain is Large ribosomal subunit protein uL13 (144 aa).

This sequence belongs to the universal ribosomal protein uL13 family. Part of the 50S ribosomal subunit.

Functionally, this protein is one of the early assembly proteins of the 50S ribosomal subunit, although it is not seen to bind rRNA by itself. It is important during the early stages of 50S assembly. This Mycoplasma mobile (strain ATCC 43663 / 163K / NCTC 11711) (Mesomycoplasma mobile) protein is Large ribosomal subunit protein uL13.